The chain runs to 540 residues: Lysosomal cobalamin transport escort protein LMBD1 (540 aa).

Topologically, residues 1–10 are extracellular; the sequence is MATSGAASAE. Residues 11 to 31 traverse the membrane as a helical segment; that stretch reads LVIGWCIFGLLLLAILAFCWI. Over 32–50 the chain is Cytoplasmic; it reads YVRKYQSRRESEVVSTITA. A helical membrane pass occupies residues 51 to 71; sequence IFSLAIALITSALLPVDIFLV. The Extracellular portion of the chain corresponds to 72-100; it reads SYMKNQNGTFKDWANANVSRQIEDTVLYG. 2 N-linked (GlcNAc...) asparagine glycosylation sites follow: N78 and N88. The helical transmembrane segment at 101-121 threads the bilayer; the sequence is YYTLYSVILFCVFFWIPFVYF. Over 122 to 144 the chain is Cytoplasmic; the sequence is YYEEKDDDDTSKCTQIKTALKYT. Residues 145 to 165 traverse the membrane as a helical segment; sequence LGFVVICALLLLVGAFVPLNV. Residues 166 to 188 lie on the Extracellular side of the membrane; it reads PNNKNSTEWEKVKSLFEELGSSH. N170 carries an N-linked (GlcNAc...) asparagine glycan. The chain crosses the membrane as a helical span at residues 189-209; that stretch reads GLAALSFSISSLTLIGMLAAI. Over 210–305 the chain is Cytoplasmic; that stretch reads TYTAYGMSAL…KFCGALRPLK (96 aa). A YERL motif; mediates interaction with adapter protein complex 2 and is essential for its function in clathrin-mediated endocytosis of INSR motif is present at residues 232 to 235; sequence YERL. Position 238 is a phosphothreonine (T238). The WTKF motif; mediates interaction with adapter protein complex 2 and is essential for its function in clathrin-mediated endocytosis of INSR motif lies at 294 to 297; it reads WTKF. A helical membrane pass occupies residues 306-326; that stretch reads IVWGIFFILVALLFVISLFLS. Over 327-364 the chain is Extracellular; that stretch reads NLDKALHSAGIDSGFIIFGANLSNPLNMLLPLLQTVFP. Residue N347 is glycosylated (N-linked (GlcNAc...) asparagine). Residues 365–385 form a helical membrane-spanning segment; the sequence is LDYILITIIIMYFIFTSMAGI. Over 386-408 the chain is Cytoplasmic; that stretch reads RNIGIWFFWIRLYKIRRGRTRPQ. The chain crosses the membrane as a helical span at residues 409–429; sequence ALLFLCMILLLIVLHTSYMIY. Topologically, residues 430 to 486 are extracellular; that stretch reads SLAPQYVMYGSQNYLIETNITSDNHKGNSTLSVPKRCDADAPEDQCTVTRTYLFLHK. N448 and N457 each carry an N-linked (GlcNAc...) asparagine glycan. The chain crosses the membrane as a helical span at residues 487 to 507; it reads FWFFSAAYYFGNWAFLGVFLI. Topologically, residues 508 to 540 are cytoplasmic; that stretch reads GLIVSCCKGKKSVIEGVDEDSDISDDEPSVYSA. Phosphoserine is present on residues S528 and S531.

This sequence belongs to the LIMR family. LMBRD1 subfamily. In terms of assembly, (Microbial infection) Interacts with hepatitis delta virus NES (HDAg-L). As to quaternary structure, interacts with ABCD4; this interaction induces the translocation of ABCD4 from the endoplasmic reticulum to the lysosome. Interacts with ABCD4 and MMACHC; this interaction ensures the transport of cobalamin from the lysosome to the cytoplasm. Interacts with INSR, adapter protein complex 2 and clathrin heavy chain. In terms of processing, N-glycosylated. As to expression, isoform 3 is expressed in liver.

It is found in the endoplasmic reticulum membrane. The protein resides in the lysosome membrane. Its subcellular location is the cell membrane. The protein localises to the cytoplasmic vesicle. It localises to the clathrin-coated vesicle. Functionally, lysosomal membrane chaperone required to export cobalamin (vitamin B12) from the lysosome to the cytosol, allowing its conversion to cofactors. Targets ABCD4 transporter from the endoplasmic reticulum to the lysosome. Then forms a complex with lysosomal ABCD4 and cytoplasmic MMACHC to transport cobalamin across the lysosomal membrane. Acts as an adapter protein which plays an important role in mediating and regulating the internalization of the insulin receptor (INSR). Involved in clathrin-mediated endocytosis of INSR via its interaction with adapter protein complex 2. Essential for the initiation of gastrulation and early formation of mesoderm structures during embryogenesis. Its function is as follows. (Microbial infection) May play a role in the assembly of hepatitis delta virus (HDV). The sequence is that of Lysosomal cobalamin transport escort protein LMBD1 from Homo sapiens (Human).